Consider the following 226-residue polypeptide: MAPYHIRQFQDRDHRRVLDLFSRGMEEHVPAAFYHVLTLPHSLLLFPGVPVTIILVSGSWLLATVYSFLFLLCLRLIFWVSCRNYVAKCLQADLADITKSYLNAHGSFWVAESGGQVVGIVAALPVKEPPSGRKQLQLFRLSVSSQHRGQGIAKALVRIVLQFARDQGYTDVVLVTGNMQYSAISLYQGMGFQKTGHYFVSIAKRLIGLSIFHFTYSLPSVWEPRM.

A run of 2 helical transmembrane segments spans residues 33-55 and 60-82; these read FYHVLTLPHSLLLFPGVPVTIIL and WLLATVYSFLFLLCLRLIFWVSC. Positions 69–221 constitute an N-acetyltransferase domain; sequence LFLLCLRLIF…FHFTYSLPSV (153 aa). At lysine 204 the chain carries N6-acetyllysine.

This sequence belongs to the camello family.

Its subcellular location is the membrane. Functionally, probable acetyltransferase. Has no detectable histone acetyltransferase activity towards histone H3 or H4. The polypeptide is N-acetyltransferase family 8 member 2 (Rattus norvegicus (Rat)).